Consider the following 261-residue polypeptide: SLA class II histocompatibility antigen, DQ haplotype C beta chain (261 aa).

The first 31 residues, 1–31 (MSGMVALRLPRGLWTAALTVMLVVLGAPVAE), serve as a signal peptide directing secretion. A beta-1 region spans residues 32–126 (GRDSPQDFVF…IEEGTTLQRR (95 aa)). At 32 to 230 (GRDSPQDFVF…RAQSESAQSK (199 aa)) the chain is on the extracellular side. 2 disulfides stabilise this stretch: Cys-47/Cys-111 and Cys-149/Cys-205. A glycan (N-linked (GlcNAc...) asparagine) is linked at Asn-51. The segment at 127 to 220 (VQPTVTISPS…SLQNPILVEW (94 aa)) is beta-2. An Ig-like C1-type domain is found at 129 to 233 (PTVTISPSKA…SESAQSKMLS (105 aa)). Residues 221 to 230 (RAQSESAQSK) are connecting peptide. Residues 231-251 (MLSGVGGFVLGLIFLGLGLFI) form a helical membrane-spanning segment. The Cytoplasmic segment spans residues 252–261 (RHRSQKGLVR).

It belongs to the MHC class II family.

Its subcellular location is the membrane. This Sus scrofa (Pig) protein is SLA class II histocompatibility antigen, DQ haplotype C beta chain.